A 254-amino-acid polypeptide reads, in one-letter code: tRNA (guanine-N(1)-)-methyltransferase (254 aa).

S-adenosyl-L-methionine contacts are provided by residues Gly117 and Leu136 to Leu141.

The protein belongs to the RNA methyltransferase TrmD family. As to quaternary structure, homodimer.

It is found in the cytoplasm. The enzyme catalyses guanosine(37) in tRNA + S-adenosyl-L-methionine = N(1)-methylguanosine(37) in tRNA + S-adenosyl-L-homocysteine + H(+). Functionally, specifically methylates guanosine-37 in various tRNAs. This Levilactobacillus brevis (strain ATCC 367 / BCRC 12310 / CIP 105137 / JCM 1170 / LMG 11437 / NCIMB 947 / NCTC 947) (Lactobacillus brevis) protein is tRNA (guanine-N(1)-)-methyltransferase.